A 416-amino-acid chain; its full sequence is uncharacterized protein (416 aa).

Zn(2+) is bound by residues His29, Asp31, Glu144, His215, and His236.

Belongs to the metallo-dependent hydrolases superfamily. Peptidase M19 family. Zn(2+) is required as a cofactor.

The enzyme catalyses an L-aminoacyl-L-amino acid + H2O = 2 an L-alpha-amino acid. This is an uncharacterized protein from Schizosaccharomyces pombe (strain 972 / ATCC 24843) (Fission yeast).